The sequence spans 535 residues: Calcium-dependent protein kinase 5 (535 aa).

The tract at residues methionine 1–leucine 46 is disordered. Glycine 2 carries N-myristoyl glycine lipidation. Cysteine 5 is lipidated: S-palmitoyl cysteine. The span at histidine 32–glutamine 43 shows a compositional bias: basic and acidic residues. Residues tyrosine 72 to isoleucine 330 enclose the Protein kinase domain. Residues leucine 78–threonine 86 and lysine 101 each bind ATP. Residue aspartate 196 is the Proton acceptor of the active site. Residues alanine 336–isoleucine 366 form an autoinhibitory domain region. EF-hand domains follow at residues glutamate 373 to threonine 408, leucine 409 to leucine 444, aspartate 445 to threonine 480, and phenylalanine 484 to cysteine 514. Ca(2+)-binding residues include aspartate 386, aspartate 388, serine 390, glutamate 397, aspartate 422, aspartate 424, serine 426, threonine 428, glutamate 433, aspartate 458, aspartate 460, serine 462, tyrosine 464, glutamate 469, aspartate 492, aspartate 494, aspartate 496, arginine 498, and glutamate 503.

It belongs to the protein kinase superfamily. Ser/Thr protein kinase family. CDPK subfamily.

The protein localises to the cell membrane. It catalyses the reaction L-seryl-[protein] + ATP = O-phospho-L-seryl-[protein] + ADP + H(+). It carries out the reaction L-threonyl-[protein] + ATP = O-phospho-L-threonyl-[protein] + ADP + H(+). With respect to regulation, activated by calcium. Autophosphorylation may play an important role in the regulation of the kinase activity. Regulates the production of reactive oxygen species (ROS) by NADPH oxidase. The sequence is that of Calcium-dependent protein kinase 5 (CPK5) from Solanum tuberosum (Potato).